We begin with the raw amino-acid sequence, 322 residues long: Sideroflexin fsf1 (322 aa).

Transmembrane regions (helical) follow at residues 143-163, 175-195, 229-249, and 269-289; these read SYIY…KIVP, VLGR…NVFL, TALS…LVLM, and LGLI…VFPA.

It belongs to the sideroflexin family.

It localises to the mitochondrion membrane. Functionally, mitochondrial amino-acid transporter that mediates transport of serine into mitochondria. The sequence is that of Sideroflexin fsf1 from Schizosaccharomyces pombe (strain 972 / ATCC 24843) (Fission yeast).